The sequence spans 88 residues: DNA-directed RNA polymerase subunit omega (88 aa).

It belongs to the RNA polymerase subunit omega family. As to quaternary structure, the RNAP catalytic core consists of 2 alpha, 1 beta, 1 beta' and 1 omega subunit. When a sigma factor is associated with the core the holoenzyme is formed, which can initiate transcription.

It carries out the reaction RNA(n) + a ribonucleoside 5'-triphosphate = RNA(n+1) + diphosphate. In terms of biological role, promotes RNA polymerase assembly. Latches the N- and C-terminal regions of the beta' subunit thereby facilitating its interaction with the beta and alpha subunits. The protein is DNA-directed RNA polymerase subunit omega of Actinobacillus succinogenes (strain ATCC 55618 / DSM 22257 / CCUG 43843 / 130Z).